The following is a 77-amino-acid chain: MEKLTILLLVAAVLMSTQALIQHDGEKSQKAKMKFLTARTLSAKTRGVDCVGLSSYCGPWNNPPCCSWYTCDYYCKF.

A signal peptide spans 1–19 (MEKLTILLLVAAVLMSTQA). The propeptide occupies 20-46 (LIQHDGEKSQKAKMKFLTARTLSAKTR). 3 cysteine pairs are disulfide-bonded: Cys50–Cys66, Cys57–Cys71, and Cys65–Cys75.

Belongs to the conotoxin O2 superfamily. Expressed by the venom duct.

The protein localises to the secreted. The sequence is that of Conotoxin VnMEKL-0111 from Conus ventricosus (Mediterranean cone).